The sequence spans 1168 residues: DNA-directed RNA polymerase subunit beta (1168 aa).

The protein belongs to the RNA polymerase beta chain family. In terms of assembly, the RNAP catalytic core consists of 2 alpha, 1 beta, 1 beta' and 1 omega subunit. When a sigma factor is associated with the core the holoenzyme is formed, which can initiate transcription.

It catalyses the reaction RNA(n) + a ribonucleoside 5'-triphosphate = RNA(n+1) + diphosphate. DNA-dependent RNA polymerase catalyzes the transcription of DNA into RNA using the four ribonucleoside triphosphates as substrates. The protein is DNA-directed RNA polymerase subunit beta of Corynebacterium kroppenstedtii (strain DSM 44385 / JCM 11950 / CIP 105744 / CCUG 35717).